The chain runs to 195 residues: HTH-type transcriptional regulator BetI (195 aa).

Residues 8 to 68 (SIRRRQLIDA…ATMRDITSQL (61 aa)) enclose the HTH tetR-type domain. The segment at residues 31–50 (TIAQIARRAGVSTGIISHYF) is a DNA-binding region (H-T-H motif).

Its pathway is amine and polyamine biosynthesis; betaine biosynthesis via choline pathway [regulation]. Functionally, repressor involved in the biosynthesis of the osmoprotectant glycine betaine. It represses transcription of the choline transporter BetT and the genes of BetAB involved in the synthesis of glycine betaine. This is HTH-type transcriptional regulator BetI from Escherichia coli O8 (strain IAI1).